Consider the following 236-residue polypeptide: uncharacterized protein (236 aa).

The span at 1-12 (MKLLGHRKSHGH) shows a compositional bias: basic residues. Positions 1 to 108 (MKLLGHRKSH…KAANRARMTE (108 aa)) are disordered. Positions 13–31 (QRADASPDAGSKDGCRPDS) are enriched in basic and acidic residues. Over residues 32-47 (GRTSGSDTSRGSQTTG) the composition is skewed to low complexity. Over residues 52–65 (PTPKRNQSRRHTKK) the composition is skewed to basic residues. A compositionally biased stretch (low complexity) spans 67-78 (PVAPAPMTAAQA). The span at 90 to 108 (LSREERRAEKAANRARMTE) shows a compositional bias: basic and acidic residues. 2 helical membrane passes run 142-162 (NLLGLFMPSALTLLFVMFAVP) and 166-186 (FYLSPAMLILLALMTIDAIIL).

It localises to the cell membrane. This is an uncharacterized protein from Mycobacterium tuberculosis (strain CDC 1551 / Oshkosh).